Consider the following 446-residue polypeptide: Tryptophan synthase beta chain 2 (446 aa).

K110 bears the N6-(pyridoxal phosphate)lysine mark.

This sequence belongs to the TrpB family. As to quaternary structure, tetramer of two alpha and two beta chains. Requires pyridoxal 5'-phosphate as cofactor.

The catalysed reaction is (1S,2R)-1-C-(indol-3-yl)glycerol 3-phosphate + L-serine = D-glyceraldehyde 3-phosphate + L-tryptophan + H2O. Its pathway is amino-acid biosynthesis; L-tryptophan biosynthesis; L-tryptophan from chorismate: step 5/5. The beta subunit is responsible for the synthesis of L-tryptophan from indole and L-serine. This is Tryptophan synthase beta chain 2 (trpB2) from Pyrococcus furiosus (strain ATCC 43587 / DSM 3638 / JCM 8422 / Vc1).